The sequence spans 399 residues: Tryptophan synthase beta chain (399 aa).

Lys92 bears the N6-(pyridoxal phosphate)lysine mark.

It belongs to the TrpB family. As to quaternary structure, tetramer of two alpha and two beta chains. Requires pyridoxal 5'-phosphate as cofactor.

The catalysed reaction is (1S,2R)-1-C-(indol-3-yl)glycerol 3-phosphate + L-serine = D-glyceraldehyde 3-phosphate + L-tryptophan + H2O. The protein operates within amino-acid biosynthesis; L-tryptophan biosynthesis; L-tryptophan from chorismate: step 5/5. The beta subunit is responsible for the synthesis of L-tryptophan from indole and L-serine. The chain is Tryptophan synthase beta chain from Bordetella pertussis (strain Tohama I / ATCC BAA-589 / NCTC 13251).